The chain runs to 199 residues: Chaperone protein TorD (199 aa).

This sequence belongs to the TorD/DmsD family. TorD subfamily.

It is found in the cytoplasm. Functionally, involved in the biogenesis of TorA. Acts on TorA before the insertion of the molybdenum cofactor and, as a result, probably favors a conformation of the apoenzyme that is competent for acquiring the cofactor. The protein is Chaperone protein TorD of Shigella dysenteriae serotype 1 (strain Sd197).